A 339-amino-acid polypeptide reads, in one-letter code: UDP-glucose 4-epimerase (339 aa).

Residues 10–12 (GYI), 31–35 (DNLSN), 58–59 (DL), F80, and K84 each bind NAD(+). Substrate is bound at residue 124–126 (SAT). The active-site Proton acceptor is Y148. NAD(+) contacts are provided by K152 and Y176. Substrate is bound by residues 176–178 (YFN), 197–199 (NNL), R230, and 291–294 (RPGD).

It belongs to the NAD(P)-dependent epimerase/dehydratase family. The cofactor is NAD(+).

The catalysed reaction is UDP-alpha-D-glucose = UDP-alpha-D-galactose. It carries out the reaction UDP-N-acetyl-alpha-D-glucosamine = UDP-N-acetyl-alpha-D-galactosamine. Its pathway is cell wall biogenesis; teichoic acid biosynthesis. Catalyzes two distinct but analogous reactions: the reversible epimerization of UDP-glucose to UDP-galactose and the reversible epimerization of UDP-N-acetylglucosamine to UDP-N-acetylgalactosamine. The enzyme is more efficient in catalyzing the interconversion between unacetylated than between corresponding N-acetylated substrates. Essential for growth in media containing either glucose or galactose. May protect the cell from the toxic effects of galactose and glucose or derivatives of both sugars. Involved in the biosynthesis of teichoic acids via the formation of UDP-N-acetylgalactosamine. Influences cell division. The protein is UDP-glucose 4-epimerase of Bacillus subtilis (strain 168).